The chain runs to 418 residues: Queuine tRNA-ribosyltransferase accessory subunit 2 (418 aa).

Zn(2+)-binding residues include Cys-325, Cys-327, Cys-330, and His-356.

The protein belongs to the queuine tRNA-ribosyltransferase family. QTRT2 subfamily. In terms of assembly, heterodimer of a catalytic subunit and an accessory subunit. The cofactor is Zn(2+).

It is found in the cytoplasm. In terms of biological role, non-catalytic subunit of the queuine tRNA-ribosyltransferase (TGT) that catalyzes the base-exchange of a guanine (G) residue with queuine (Q) at position 34 (anticodon wobble position) in tRNAs with GU(N) anticodons (tRNA-Asp, -Asn, -His and -Tyr), resulting in the hypermodified nucleoside queuosine (7-(((4,5-cis-dihydroxy-2-cyclopenten-1-yl)amino)methyl)-7-deazaguanosine). The polypeptide is Queuine tRNA-ribosyltransferase accessory subunit 2 (Drosophila melanogaster (Fruit fly)).